A 320-amino-acid chain; its full sequence is Cytochrome c biogenesis protein CcsA (320 aa).

8 consecutive transmembrane segments (helical) span residues 14–34 (SFFLLFFVTFIYWGKFLYINI), 37–57 (ITILGEISMKIACFFITTFLL), 68–88 (LSNLYESSMFLSWSFTLIHLI), 97–117 (WLGIITAPSAMLTHGFATLSL), 143–163 (MMLSYSTLLCGSLLAITILII), 228–248 (VISLGFPLLTIGILSGAVWAN), 263–283 (WALITWLIFAIYLHTRMIKGW), and 289–309 (AIIASLGFFIVWICYLGVNLL).

This sequence belongs to the CcmF/CycK/Ccl1/NrfE/CcsA family. May interact with Ccs1.

Its subcellular location is the plastid. It is found in the chloroplast thylakoid membrane. In terms of biological role, required during biogenesis of c-type cytochromes (cytochrome c6 and cytochrome f) at the step of heme attachment. The sequence is that of Cytochrome c biogenesis protein CcsA from Marchantia polymorpha (Common liverwort).